We begin with the raw amino-acid sequence, 352 residues long: DNA polymerase IV (352 aa).

One can recognise a UmuC domain in the interval 4 to 185; it reads IIHVDMDCFY…LPLEKIPGVG (182 aa). The Mg(2+) site is built by aspartate 8 and aspartate 103. Residue glutamate 104 is part of the active site.

The protein belongs to the DNA polymerase type-Y family. In terms of assembly, monomer. Mg(2+) serves as cofactor.

It localises to the cytoplasm. The enzyme catalyses DNA(n) + a 2'-deoxyribonucleoside 5'-triphosphate = DNA(n+1) + diphosphate. In terms of biological role, poorly processive, error-prone DNA polymerase involved in untargeted mutagenesis. Copies undamaged DNA at stalled replication forks, which arise in vivo from mismatched or misaligned primer ends. These misaligned primers can be extended by PolIV. Exhibits no 3'-5' exonuclease (proofreading) activity. May be involved in translesional synthesis, in conjunction with the beta clamp from PolIII. This chain is DNA polymerase IV, found in Pectobacterium atrosepticum (strain SCRI 1043 / ATCC BAA-672) (Erwinia carotovora subsp. atroseptica).